The sequence spans 338 residues: 1-aminocyclopropane-1-carboxylate deaminase (338 aa).

Lys-51 carries the N6-(pyridoxal phosphate)lysine modification. Ser-78 acts as the Nucleophile in catalysis.

Belongs to the ACC deaminase/D-cysteine desulfhydrase family. Homotrimer. Requires pyridoxal 5'-phosphate as cofactor.

It carries out the reaction 1-aminocyclopropane-1-carboxylate + H2O = 2-oxobutanoate + NH4(+). Catalyzes a cyclopropane ring-opening reaction, the irreversible conversion of 1-aminocyclopropane-1-carboxylate (ACC) to ammonia and alpha-ketobutyrate. Allows growth on ACC as a nitrogen source. The sequence is that of 1-aminocyclopropane-1-carboxylate deaminase from Variovorax paradoxus (strain S110).